The primary structure comprises 327 residues: Thioredoxin reductase sirT (327 aa).

Residues 15–18 (AGPA), 37–42 (DTGVFR), His50, and Ala115 each bind FAD. Cys139 and Cys142 are oxidised to a cystine. FAD contacts are provided by residues Asp289 and 296-297 (QV).

This sequence belongs to the class-II pyridine nucleotide-disulfide oxidoreductase family. Homodimer. FAD is required as a cofactor.

Its pathway is mycotoxin biosynthesis. Thioredoxin reductase; part of the gene cluster that mediates the biosynthesis of sirodesmin PL, an epipolythiodioxopiperazine (ETP) characterized by a disulfide bridged cyclic dipeptide and that acts as a phytotoxin which is involved in the blackleg didease of canola. SirD catalyzes the O-prenylation of L-tyrosine (L-Tyr) in the presence of dimethylallyl diphosphate (DMAPP) to yield 4-O-dimethylallyl-L-Tyr, and therefore represents probably the first pathway-specific enzyme in the biosynthesis of sirodesmin PL. 4-O-dimethylallyl-L-Tyr, then undergoes condensation with L-Ser in a reaction catalyzed by the non-ribosomal peptide synthase sirP to form the diketopiperazine (DKP) backbone. Further bishydroxylation of the DKP performed by the cytochrome P450 monooxygenase sirC leads to the production of the intermediate phomamide. This step is essential to form the reactive thiol group required for toxicity of sirodesmin PL. The next steps of sirodesmin biosynthesis are not well understood yet, but some predictions could be made from intermediate compounds identification. Phomamide is converted into phomalizarine via oxidation, probably by sirT. Further oxidation, methylation (by sirM or sirN) and reduction steps convert phomalizarine to deacetyl sirodesmin. Finally, acetyltransferase sirH probably acetylates deacetyl sirodesmin to produce sirodesmin PL. This is Thioredoxin reductase sirT from Leptosphaeria maculans (Blackleg fungus).